A 259-amino-acid chain; its full sequence is UPF0246 protein PLES_14941 (259 aa).

This sequence belongs to the UPF0246 family.

This is UPF0246 protein PLES_14941 from Pseudomonas aeruginosa (strain LESB58).